The following is a 474-amino-acid chain: Adenosylhomocysteinase (474 aa).

The substrate site is built by T61, D136, and E196. 197–199 (TTT) is an NAD(+) binding site. Substrate-binding residues include K226 and D230. NAD(+)-binding positions include N231, 260–265 (GYGDVG), E283, N318, 339–341 (IGH), and N384.

The protein belongs to the adenosylhomocysteinase family. NAD(+) is required as a cofactor.

The protein resides in the cytoplasm. The enzyme catalyses S-adenosyl-L-homocysteine + H2O = L-homocysteine + adenosine. It participates in amino-acid biosynthesis; L-homocysteine biosynthesis; L-homocysteine from S-adenosyl-L-homocysteine: step 1/1. In terms of biological role, may play a key role in the regulation of the intracellular concentration of adenosylhomocysteine. The sequence is that of Adenosylhomocysteinase from Ralstonia nicotianae (strain ATCC BAA-1114 / GMI1000) (Ralstonia solanacearum).